A 142-amino-acid polypeptide reads, in one-letter code: MVLSAADKGNVKAAWGKVGDHAAEYGAEALERMFLSFPTTKTYFPHFDLSHGSAQVKGHGAKVAAALTKAVGHLDDLPGALSELSDLHAHKLRVDPVNFKLLSHSLLVTLASHLPNDFTPAVHASLDKFLANVSTVLTSKYR.

A Globin domain is found at 2–142 (VLSAADKGNV…VSTVLTSKYR (141 aa)). S4 is modified (phosphoserine). Residues K8 and K12 each carry the N6-succinyllysine modification. K17 bears the N6-acetyllysine; alternate mark. K17 is subject to N6-succinyllysine; alternate. Y25 carries the phosphotyrosine modification. Residue S36 is modified to Phosphoserine. At K41 the chain carries N6-succinyllysine. S50 carries the post-translational modification Phosphoserine. H59 lines the O2 pocket. H88 serves as a coordination point for heme b. Position 103 is a phosphoserine (S103). T109 carries the phosphothreonine modification. Position 125 is a phosphoserine (S125). A phosphothreonine mark is found at T135 and T138. S139 is modified (phosphoserine).

The protein belongs to the globin family. As to quaternary structure, heterotetramer of two alpha chains and two beta chains. As to expression, red blood cells.

In terms of biological role, involved in oxygen transport from the lung to the various peripheral tissues. Hemopressin acts as an antagonist peptide of the cannabinoid receptor CNR1. Hemopressin-binding efficiently blocks cannabinoid receptor CNR1 and subsequent signaling. This Bos gaurus frontalis (Domestic gayal) protein is Hemoglobin subunit alpha (HBA).